Here is a 118-residue protein sequence, read N- to C-terminus: Large ribosomal subunit protein bL20 (118 aa).

It belongs to the bacterial ribosomal protein bL20 family.

Its function is as follows. Binds directly to 23S ribosomal RNA and is necessary for the in vitro assembly process of the 50S ribosomal subunit. It is not involved in the protein synthesizing functions of that subunit. This Yersinia enterocolitica serotype O:8 / biotype 1B (strain NCTC 13174 / 8081) protein is Large ribosomal subunit protein bL20.